The primary structure comprises 364 residues: Glutamate 5-kinase (364 aa).

Lys-7 provides a ligand contact to ATP. Substrate contacts are provided by Ser-47, Asp-134, and Asn-146. Residues 166 to 167 (TD) and 209 to 215 (TGGIKTK) each bind ATP. In terms of domain architecture, PUA spans 274 to 349 (QGTLHVDDGA…NRIKSTQYPV (76 aa)).

Belongs to the glutamate 5-kinase family.

It localises to the cytoplasm. It catalyses the reaction L-glutamate + ATP = L-glutamyl 5-phosphate + ADP. It participates in amino-acid biosynthesis; L-proline biosynthesis; L-glutamate 5-semialdehyde from L-glutamate: step 1/2. In terms of biological role, catalyzes the transfer of a phosphate group to glutamate to form L-glutamate 5-phosphate. The chain is Glutamate 5-kinase from Prochlorococcus marinus (strain SARG / CCMP1375 / SS120).